A 55-amino-acid polypeptide reads, in one-letter code: Large ribosomal subunit protein bL33 (55 aa).

This sequence belongs to the bacterial ribosomal protein bL33 family.

The protein is Large ribosomal subunit protein bL33 of Aliivibrio salmonicida (strain LFI1238) (Vibrio salmonicida (strain LFI1238)).